A 134-amino-acid polypeptide reads, in one-letter code: Phosphoribosyl-AMP cyclohydrolase (134 aa).

Position 80 (Asp-80) interacts with Mg(2+). Residue Cys-81 participates in Zn(2+) binding. Positions 82 and 84 each coordinate Mg(2+). 2 residues coordinate Zn(2+): Cys-98 and Cys-105.

This sequence belongs to the PRA-CH family. Homodimer. Requires Mg(2+) as cofactor. Zn(2+) serves as cofactor.

It is found in the cytoplasm. It catalyses the reaction 1-(5-phospho-beta-D-ribosyl)-5'-AMP + H2O = 1-(5-phospho-beta-D-ribosyl)-5-[(5-phospho-beta-D-ribosylamino)methylideneamino]imidazole-4-carboxamide. It functions in the pathway amino-acid biosynthesis; L-histidine biosynthesis; L-histidine from 5-phospho-alpha-D-ribose 1-diphosphate: step 3/9. In terms of biological role, catalyzes the hydrolysis of the adenine ring of phosphoribosyl-AMP. The protein is Phosphoribosyl-AMP cyclohydrolase of Janthinobacterium sp. (strain Marseille) (Minibacterium massiliensis).